Consider the following 294-residue polypeptide: dTDP-4-dehydrorhamnose reductase (294 aa).

NADH contacts are provided by residues 11-13 (GQL), 38-39 (DI), and 62-64 (AYT). Residues 12 to 13 (QL), 38 to 39 (DI), and 62 to 64 (AYT) each bind NADPH. A dTDP-beta-L-rhamnose-binding site is contributed by 103 to 104 (TD). NADH-binding residues include Tyr127 and Lys131. NADPH contacts are provided by Tyr127 and Lys131. Tyr127 serves as the catalytic Proton donor/acceptor. Position 152 (Trp152) interacts with dTDP-beta-L-rhamnose.

Belongs to the dTDP-4-dehydrorhamnose reductase family. In terms of assembly, homodimer. Mg(2+) serves as cofactor.

The catalysed reaction is dTDP-beta-L-rhamnose + NADP(+) = dTDP-4-dehydro-beta-L-rhamnose + NADPH + H(+). It participates in carbohydrate biosynthesis; dTDP-L-rhamnose biosynthesis. Its pathway is bacterial outer membrane biogenesis; LPS O-antigen biosynthesis. In terms of biological role, involved in the biosynthesis of the dTDP-L-rhamnose which is an important component of lipopolysaccharide (LPS). Catalyzes the reduction of dTDP-6-deoxy-L-lyxo-4-hexulose to yield dTDP-L-rhamnose. The protein is dTDP-4-dehydrorhamnose reductase of Aggregatibacter actinomycetemcomitans (Actinobacillus actinomycetemcomitans).